Reading from the N-terminus, the 420-residue chain is Phosphoglycerate kinase, cytosolic (420 aa).

Positions 23, 24, 25, 26, 39, 61, 62, 64, 65, 135, 171, and 172 each coordinate (2R)-3-phosphoglycerate. 2 residues coordinate ADP: glycine 217 and alanine 218. CDP is bound at residue glycine 217. 2 residues coordinate AMP: alanine 218 and lysine 219. Alanine 218 contributes to the ATP binding site. Alanine 218 provides a ligand contact to Mg(2+). Residue lysine 219 coordinates (2R)-3-phosphoglycerate. Position 222 (aspartate 222) interacts with CDP. Residue aspartate 222 participates in Mg(2+) binding. 2 residues coordinate ADP: lysine 223 and glycine 241. Residue lysine 223 participates in AMP binding. Residue lysine 223 coordinates ATP. Glycine 241 is a binding site for CDP. AMP-binding residues include alanine 242 and alanine 314. ATP-binding residues include alanine 242 and alanine 314. ADP is bound by residues alanine 314 and asparagine 338. 2 residues coordinate CDP: glycine 339 and phenylalanine 344. Positions 344, 345, 377, and 378 each coordinate ADP. Glutamate 345 lines the AMP pocket. The ATP site is built by glutamate 345, glutamate 377, and serine 378. Glutamate 377 serves as a coordination point for Mg(2+).

The protein belongs to the phosphoglycerate kinase family. Monomer. The cofactor is Mg(2+).

Its subcellular location is the cytoplasm. The enzyme catalyses (2R)-3-phosphoglycerate + ATP = (2R)-3-phospho-glyceroyl phosphate + ADP. It functions in the pathway carbohydrate degradation; glycolysis; pyruvate from D-glyceraldehyde 3-phosphate: step 2/5. In Trypanosoma brucei brucei, this protein is Phosphoglycerate kinase, cytosolic.